Here is a 717-residue protein sequence, read N- to C-terminus: Photosystem I P700 chlorophyll a apoprotein A1 (717 aa).

Transmembrane regions (helical) follow at residues 58–81, 144–167, 183–207, 279–297, 334–357, 373–399, 421–443, and 519–537; these read VFSA…FHGA, LYCT…FHYH, LNHH…HVSL, IAHH…GHMY, WHAQ…HHMY, LSLF…IFMV, AIIS…LYIH, and FLVH…LILL. 2 residues coordinate [4Fe-4S] cluster: Cys-561 and Cys-570. 2 consecutive transmembrane segments (helical) span residues 577–598 and 652–674; these read HVFL…HFSW and LSAY…MFLF. His-663 contributes to the chlorophyll a' binding site. Chlorophyll a is bound by residues Met-671 and Tyr-679. Trp-680 is a binding site for phylloquinone. Residues 712-717 form a helical membrane-spanning segment; the sequence is AVGVTH.

The protein belongs to the PsaA/PsaB family. As to quaternary structure, the PsaA/B heterodimer binds the P700 chlorophyll special pair and subsequent electron acceptors. PSI consists of a core antenna complex that captures photons, and an electron transfer chain that converts photonic excitation into a charge separation. The eukaryotic PSI reaction center is composed of at least 11 subunits. It depends on P700 is a chlorophyll a/chlorophyll a' dimer, A0 is one or more chlorophyll a, A1 is one or both phylloquinones and FX is a shared 4Fe-4S iron-sulfur center. as a cofactor.

The protein resides in the plastid. It is found in the chloroplast thylakoid membrane. The catalysed reaction is reduced [plastocyanin] + hnu + oxidized [2Fe-2S]-[ferredoxin] = oxidized [plastocyanin] + reduced [2Fe-2S]-[ferredoxin]. PsaA and PsaB bind P700, the primary electron donor of photosystem I (PSI), as well as the electron acceptors A0, A1 and FX. PSI is a plastocyanin-ferredoxin oxidoreductase, converting photonic excitation into a charge separation, which transfers an electron from the donor P700 chlorophyll pair to the spectroscopically characterized acceptors A0, A1, FX, FA and FB in turn. Oxidized P700 is reduced on the lumenal side of the thylakoid membrane by plastocyanin. This Drimys winteri (Winter's bark) protein is Photosystem I P700 chlorophyll a apoprotein A1.